Here is a 1231-residue protein sequence, read N- to C-terminus: Fanconi anemia group J protein homolog (1231 aa).

In terms of domain architecture, Helicase ATP-binding spans 11 to 448; that stretch reads GGVKILFPCR…SDHEPLRAVC (438 aa). Residue 46 to 53 participates in ATP binding; sequence SPTGSGKS. 2 disordered regions span residues 104–126 and 147–166; these read TFSS…GASS and QDDD…DEQL. Residues 152–166 are compositionally biased toward basic and acidic residues; that stretch reads QTDRKRIRQSHDEQL. The Nuclear localization signal motif lies at 155-173; the sequence is RKRIRQSHDEQLQARKRRC. C291, C304, C316, and C356 together coordinate [4Fe-4S] cluster. A DEAH box motif is present at residues 399-402; it reads DEAH. A compositionally biased stretch (polar residues) spans 890–903; the sequence is SKNQQQRMQMSSTN. Disordered stretches follow at residues 890 to 924, 936 to 956, and 1195 to 1231; these read SKNQ…PTSS, VSEF…PPEI, and GNEN…FFLD. 2 stretches are compositionally biased toward low complexity: residues 909-924 and 940-954; these read SQGT…PTSS and TQPT…TSPP. A compositionally biased stretch (basic and acidic residues) spans 1206–1217; it reads KGTEQKNRENRL.

The protein belongs to the DEAD box helicase family. DEAH subfamily. [4Fe-4S] cluster is required as a cofactor.

It is found in the nucleus. It carries out the reaction Couples ATP hydrolysis with the unwinding of duplex DNA at the replication fork by translocating in the 5'-3' direction. This creates two antiparallel DNA single strands (ssDNA). The leading ssDNA polymer is the template for DNA polymerase III holoenzyme which synthesizes a continuous strand.. The catalysed reaction is ATP + H2O = ADP + phosphate + H(+). In terms of biological role, DNA-dependent helicase and 5' to 3' DNA helicase required for the maintenance of chromosomal stability. Involved in the repair of DNA double-strand breaks by homologous recombination. Involved in the repair of abasic sites at replication forks by promoting the degradation of DNA-protein cross-links: acts by catalyzing unfolding of HMCES DNA-protein cross-link via its helicase activity, exposing the underlying DNA and enabling cleavage of the DNA-protein adduct by the SPRTN metalloprotease. The chain is Fanconi anemia group J protein homolog (brip1.L) from Xenopus laevis (African clawed frog).